A 270-amino-acid chain; its full sequence is MIOREX complex component 3 (270 aa).

The N-terminal 12 residues, 1–12, are a transit peptide targeting the mitochondrion; that stretch reads MSRTIPFLFKLV.

In terms of assembly, associates with the mitochondrial ribosome.

Its subcellular location is the mitochondrion. Component of MIOREX complexes, large expressome-like assemblies of ribosomes with factors involved in all the steps of post-transcriptional gene expression. The chain is MIOREX complex component 3 from Saccharomyces cerevisiae (strain ATCC 204508 / S288c) (Baker's yeast).